We begin with the raw amino-acid sequence, 57 residues long: Probable antitoxin MazE1 (57 aa).

In terms of assembly, forms a complex with cognate toxin MazF1.

Functionally, antitoxin component of a type II toxin-antitoxin (TA) system. The chain is Probable antitoxin MazE1 (mazE1) from Mycobacterium tuberculosis (strain ATCC 25618 / H37Rv).